The chain runs to 502 residues: Mitochondrial fusion and transport protein UGO1 (502 aa).

Position 1 is an N-acetylmethionine (M1). Residues 1 to 293 lie on the Cytoplasmic side of the membrane; that stretch reads MNNNNVTEAT…VINSPDISKS (293 aa). The interval 1-294 is binds FZO1; sequence MNNNNVTEAT…INSPDISKSF (294 aa). The stretch at 288 to 383 is one Solcar repeat; it reads PDISKSFILA…NSFFNKLFDL (96 aa). A helical; Signal-anchor for type II membrane protein membrane pass occupies residues 294–314; it reads FILALGAGVFTSIILLPVDLI. The binds MGM1 stretch occupies residues 312–502; the sequence is DLIRTRLIVT…VDINMEQEKF (191 aa). Residues 315–502 are Mitochondrial intermembrane-facing; it reads RTRLIVTSFK…VDINMEQEKF (188 aa).

Interacts with FZO1 through its cytoplasmic domain and with MGM1 through its mitochondrial intermembrane space domain.

The protein localises to the mitochondrion outer membrane. In terms of biological role, required for mitochondrial fusion as well as normal mitochondrial morphology by bridging the essential interaction between FZO1 and MGM1. May coordinate fusion of inner and outer membranes during mitochondrial fusion. The sequence is that of Mitochondrial fusion and transport protein UGO1 from Saccharomyces cerevisiae (strain ATCC 204508 / S288c) (Baker's yeast).